The sequence spans 126 residues: Small ribosomal subunit protein uS13 (126 aa).

Positions 98-126 (PLRGQSTKNNARTRKGKKKTVANKKKATK) are disordered. Basic residues predominate over residues 108–126 (ARTRKGKKKTVANKKKATK).

The protein belongs to the universal ribosomal protein uS13 family. In terms of assembly, part of the 30S ribosomal subunit. Forms a loose heterodimer with protein S19. Forms two bridges to the 50S subunit in the 70S ribosome.

Located at the top of the head of the 30S subunit, it contacts several helices of the 16S rRNA. In the 70S ribosome it contacts the 23S rRNA (bridge B1a) and protein L5 of the 50S subunit (bridge B1b), connecting the 2 subunits; these bridges are implicated in subunit movement. Contacts the tRNAs in the A and P-sites. The sequence is that of Small ribosomal subunit protein uS13 from Parabacteroides distasonis (strain ATCC 8503 / DSM 20701 / CIP 104284 / JCM 5825 / NCTC 11152).